Here is a 449-residue protein sequence, read N- to C-terminus: Phosphoglucosamine mutase (449 aa).

The Phosphoserine intermediate role is filled by Ser104. Ser104, Asp243, Asp245, and Asp247 together coordinate Mg(2+). Residue Ser104 is modified to Phosphoserine.

It belongs to the phosphohexose mutase family. It depends on Mg(2+) as a cofactor. In terms of processing, activated by phosphorylation.

It carries out the reaction alpha-D-glucosamine 1-phosphate = D-glucosamine 6-phosphate. In terms of biological role, catalyzes the conversion of glucosamine-6-phosphate to glucosamine-1-phosphate. The sequence is that of Phosphoglucosamine mutase from Xanthomonas campestris pv. campestris (strain 8004).